Reading from the N-terminus, the 493-residue chain is Ribulose bisphosphate carboxylase large chain (493 aa).

N132 contacts substrate. Residue C181 is modified to S-nitrosocysteine. T182 serves as a coordination point for substrate. K184 (proton acceptor) is an active-site residue. K186 serves as a coordination point for substrate. Mg(2+)-binding residues include K210, D212, and E213. N6-carboxylysine is present on K210. The active-site Proton acceptor is the H302. Residues R303, H335, and S387 each contribute to the substrate site. C460 bears the S-nitrosocysteine mark.

The protein belongs to the RuBisCO large chain family. Type I subfamily. In terms of assembly, heterohexadecamer of 8 large chains and 8 small chains. It depends on Mg(2+) as a cofactor.

The protein localises to the plastid. The protein resides in the chloroplast. The catalysed reaction is 2 (2R)-3-phosphoglycerate + 2 H(+) = D-ribulose 1,5-bisphosphate + CO2 + H2O. It carries out the reaction D-ribulose 1,5-bisphosphate + O2 = 2-phosphoglycolate + (2R)-3-phosphoglycerate + 2 H(+). Functionally, ruBisCO catalyzes two reactions: the carboxylation of D-ribulose 1,5-bisphosphate, the primary event in carbon dioxide fixation, as well as the oxidative fragmentation of the pentose substrate in the photorespiration process. Both reactions occur simultaneously and in competition at the same active site. Carbon dioxide and oxygen bind in the same pocket of the enzyme in a similar manner. This is Ribulose bisphosphate carboxylase large chain from Galdieria sulphuraria (Red alga).